We begin with the raw amino-acid sequence, 63 residues long: Large ribosomal subunit protein bL32 (63 aa).

Positions 1–23 (MATPKAKVSKSRRDKRRAQFTAR) are disordered. Over residues 7 to 18 (KVSKSRRDKRRA) the composition is skewed to basic residues.

This sequence belongs to the bacterial ribosomal protein bL32 family.

This is Large ribosomal subunit protein bL32 from Chlorobium phaeobacteroides (strain BS1).